Here is a 237-residue protein sequence, read N- to C-terminus: Ribosomal RNA small subunit methyltransferase G (237 aa).

Residues G78, F83, A129–E130, and R148 each bind S-adenosyl-L-methionine. The interval K218–L237 is disordered.

The protein belongs to the methyltransferase superfamily. RNA methyltransferase RsmG family.

It localises to the cytoplasm. Its function is as follows. Specifically methylates the N7 position of a guanine in 16S rRNA. This chain is Ribosomal RNA small subunit methyltransferase G, found in Streptococcus gordonii (strain Challis / ATCC 35105 / BCRC 15272 / CH1 / DL1 / V288).